The primary structure comprises 884 residues: Exocyst complex component 2 (884 aa).

Basic and acidic residues predominate over residues 1–11; the sequence is MEENAQARERL. Positions 1–27 are disordered; sequence MEENAQARERLPPTVTGLSPTEGVPGT. One can recognise an IPT/TIG domain in the interval 13–98; it reads PTVTGLSPTE…GSSNVKFRVF (86 aa). 2 coiled-coil regions span residues 178 to 206 and 846 to 874; these read ADAT…SEEM and NQRL…AENL.

Belongs to the SEC5 family. In terms of assembly, the exocyst complex is composed of sec-3/exoc1, sec-5/exoc2, sec-6/exoc3, sec-8/exoc4, sec-10/exoc5, sec-15/exoc6, exo-70/exoc7 and exo-84/exoc8.

Functionally, component of the exocyst complex involved in the docking of exocytic vesicles with fusion sites on the plasma membrane. This is Exocyst complex component 2 (sec-5) from Caenorhabditis elegans.